The sequence spans 919 residues: Exostosin-like 3 (919 aa).

Residues Met-1–Thr-30 lie on the Cytoplasmic side of the membrane. The segment at Met-1 to His-140 is required for interaction with REG3A. Residues Trp-31–Leu-51 traverse the membrane as a helical; Signal-anchor for type II membrane protein segment. Over Thr-52–Ile-919 the chain is Lumenal. 2 disulfides stabilise this stretch: Cys-177-Cys-182 and Cys-188-Cys-236. N-linked (GlcNAc...) asparagine glycosylation is present at Asn-290. Position 362 is a phosphoserine (Ser-362). The cysteines at positions 400 and 415 are disulfide-linked. N-linked (GlcNAc...) asparagine glycosylation occurs at Asn-592. Positions 668, 672, 697, 723, 728, 744, 745, and 746 each coordinate UDP-N-acetyl-alpha-D-glucosamine. A Mn(2+)-binding site is contributed by Asp-746. A glycan (N-linked (GlcNAc...) asparagine) is linked at Asn-790. A disulfide bridge connects residues Cys-831 and Cys-879. UDP-N-acetyl-alpha-D-glucosamine contacts are provided by Glu-832, Asp-833, and Arg-876. Asp-833 is an active-site residue.

Belongs to the glycosyltransferase 47 family. In terms of assembly, homodimer; disulfide-linked. Interacts with REG3A. It depends on Mn(2+) as a cofactor. Ubiquitous. Expressed in keratinocytes. Expressed in pancreas.

Its subcellular location is the endoplasmic reticulum membrane. It localises to the golgi apparatus. The protein resides in the cell membrane. It is found in the nucleus. It carries out the reaction 3-O-(beta-D-GlcA-(1-&gt;3)-beta-D-Gal-(1-&gt;3)-beta-D-Gal-(1-&gt;4)-beta-D-Xyl)-L-seryl-[protein] + UDP-N-acetyl-alpha-D-glucosamine = 3-O-(alpha-D-GlcNAc-(1-&gt;4)-beta-D-GlcA-(1-&gt;3)-beta-D-Gal-(1-&gt;3)-beta-D-Gal-(1-&gt;4)-beta-D-Xyl)-L-seryl-[protein] + UDP + H(+). Its pathway is glycan metabolism; heparan sulfate biosynthesis. In terms of biological role, glycosyltransferase which regulates the biosynthesis of heparan sulfate (HS). Initiates HS synthesis by transferring the first N-acetyl-alpha-D-glucosamine (alpha-GlcNAc) residue (GlcNAcT-I activity) to the tetrasaccharide linker (GlcA-Gal-Gal-Xyl-)Ser core linker. May also transfer alpha-GlcNAc residues during HS elongation (GlcNAcT-II activity). Lacks glucuronyl transferase II (GlcAT-II) activity. Important for both skeletal development and hematopoiesis, through the formation of HS proteoglycans (HSPGs). Through the synthesis of HS, regulates postnatal pancreatic islet maturation and insulin secretion. Functionally, receptor for REG3A, REG3B and REG3G, induces the activation of downstream signaling pathways such as PI3K-AKT or RAS-RAF-MEK-ERK signaling pathway. Required for the function of REG3A in regulating keratinocyte proliferation and differentiation. Required for the inhibition of skin inflammation mediated by REG3A through the activation of PI3K-AKT-STAT3 pathway. Required for the function of REG3A and REG3G in glucose tolerance in pancreas. Expressed in microglia, is activated by nociceptor-derived REG3G in response to endotoxins, leading to the inhibition of kynurenine pathway to prevent endotoxic death. In Homo sapiens (Human), this protein is Exostosin-like 3.